A 381-amino-acid chain; its full sequence is Flap endonuclease 1 (381 aa).

The N-domain stretch occupies residues 1–105 (MGIKGLNSII…HELDKRTSRR (105 aa)). A Mg(2+)-binding site is contributed by aspartate 34. Residues arginine 47 and arginine 71 each contribute to the DNA site. Residues aspartate 87, glutamate 156, glutamate 158, aspartate 177, and aspartate 179 each contribute to the Mg(2+) site. The tract at residues 120-251 (EKMKHERRLV…VTALKLMKEH (132 aa)) is I-domain. DNA is bound at residue glutamate 156. DNA contacts are provided by glycine 229 and aspartate 231. Position 231 (aspartate 231) interacts with Mg(2+). The tract at residues 338–346 (VQGRLDGFF) is interaction with PCNA.

Belongs to the XPG/RAD2 endonuclease family. FEN1 subfamily. Interacts with PCNA. Three molecules of FEN1 bind to one PCNA trimer with each molecule binding to one PCNA monomer. PCNA stimulates the nuclease activity without altering cleavage specificity. Requires Mg(2+) as cofactor. Post-translationally, phosphorylated. Phosphorylation upon DNA damage induces relocalization to the nuclear plasma.

The protein resides in the nucleus. The protein localises to the nucleolus. It is found in the nucleoplasm. It localises to the mitochondrion. Structure-specific nuclease with 5'-flap endonuclease and 5'-3' exonuclease activities involved in DNA replication and repair. During DNA replication, cleaves the 5'-overhanging flap structure that is generated by displacement synthesis when DNA polymerase encounters the 5'-end of a downstream Okazaki fragment. It enters the flap from the 5'-end and then tracks to cleave the flap base, leaving a nick for ligation. Also involved in the long patch base excision repair (LP-BER) pathway, by cleaving within the apurinic/apyrimidinic (AP) site-terminated flap. Acts as a genome stabilization factor that prevents flaps from equilibrating into structures that lead to duplications and deletions. Also possesses 5'-3' exonuclease activity on nicked or gapped double-stranded DNA, and exhibits RNase H activity. Also involved in replication and repair of rDNA and in repairing mitochondrial DNA. The polypeptide is Flap endonuclease 1 (Candida glabrata (strain ATCC 2001 / BCRC 20586 / JCM 3761 / NBRC 0622 / NRRL Y-65 / CBS 138) (Yeast)).